Here is a 474-residue protein sequence, read N- to C-terminus: Glutathione synthetase (474 aa).

Residue Arg-125 coordinates substrate. Position 144 (Glu-144) interacts with ATP. Mg(2+) contacts are provided by Glu-144 and Asn-146. Residues 148–151, 214–216, Gln-220, and 267–270 each bind substrate; these read IAAS, QRN, and RTGY. ATP-binding positions include Lys-305, 364 to 373, Tyr-375, 398 to 401, and Glu-425; these read KPQREGGGNN and MDKI. Position 368 (Glu-368) interacts with Mg(2+). Arg-450 contributes to the substrate binding site. ATP contacts are provided by Lys-452 and Asp-458. 461-462 provides a ligand contact to substrate; it reads VA.

Belongs to the eukaryotic GSH synthase family. As to quaternary structure, homodimer. Mg(2+) serves as cofactor. In terms of tissue distribution, expressed ubiquitously.

The catalysed reaction is gamma-L-glutamyl-L-cysteine + glycine + ATP = glutathione + ADP + phosphate + H(+). The enzyme catalyses gamma-L-glutamyl-(2S)-2-aminobutanoate + glycine + ATP = ophthalmate + ADP + phosphate + H(+). It functions in the pathway sulfur metabolism; glutathione biosynthesis; glutathione from L-cysteine and L-glutamate: step 2/2. Its function is as follows. Catalyzes the production of glutathione from gamma-glutamylcysteine and glycine in an ATP-dependent manner. Glutathione (gamma-glutamylcysteinylglycine, GSH) is the most abundant intracellular thiol in living aerobic cells and is required for numerous processes including the protection of cells against oxidative damage, amino acid transport, the detoxification of foreign compounds, the maintenance of protein sulfhydryl groups in a reduced state and acts as a cofactor for a number of enzymes. Participates in ophthalmate biosynthesis in hepatocytes. The sequence is that of Glutathione synthetase from Xenopus laevis (African clawed frog).